A 229-amino-acid polypeptide reads, in one-letter code: Potassium/proton antiporter CemA (229 aa).

2 consecutive transmembrane segments (helical) span residues 7–27 (LASL…SISF) and 106–126 (IISH…YFIL).

Belongs to the CemA family.

Its subcellular location is the plastid. It is found in the chloroplast inner membrane. The catalysed reaction is K(+)(in) + H(+)(out) = K(+)(out) + H(+)(in). Contributes to K(+)/H(+) antiport activity by supporting proton efflux to control proton extrusion and homeostasis in chloroplasts in a light-dependent manner to modulate photosynthesis. Prevents excessive induction of non-photochemical quenching (NPQ) under continuous-light conditions. Indirectly promotes efficient inorganic carbon uptake into chloroplasts. In Cycas taitungensis (Prince sago), this protein is Potassium/proton antiporter CemA.